Consider the following 98-residue polypeptide: Hainantoxin-XVII.3 (98 aa).

The N-terminal stretch at 1 to 40 is a signal peptide; it reads MTTVGVSLFRRSPEKITMKIATFLGLSFLLIASYFLICEA. Positions 41-64 are excised as a propeptide; that stretch reads QHPGFQELLILEENMRDPENSKER. 3 disulfide bridges follow: Cys-66-Cys-81, Cys-73-Cys-85, and Cys-80-Cys-95.

It belongs to the hainantoxin family. 17 subfamily. As to expression, expressed by the venom gland.

It is found in the secreted. In terms of biological role, inhibits with low potency Kv1.2/KCNA2 and Kv1.3/KCNA3 voltage-gated potassium channels. In Cyriopagopus hainanus (Chinese bird spider), this protein is Hainantoxin-XVII.3.